The sequence spans 186 residues: Ribosome-recycling factor (186 aa).

The protein belongs to the RRF family.

It localises to the cytoplasm. Responsible for the release of ribosomes from messenger RNA at the termination of protein biosynthesis. May increase the efficiency of translation by recycling ribosomes from one round of translation to another. The chain is Ribosome-recycling factor from Rickettsia prowazekii (strain Madrid E).